Reading from the N-terminus, the 88-residue chain is MEKGLLSNFWNDFKRWSEDRKVEIVIWWSNLESKVRLGFWIILIILLGILAIRIAIKVYQCVKFTNQGVKKIKRIIKRKRSIKKYRKT.

The helical transmembrane segment at 38–58 (GFWIILIILLGILAIRIAIKV) threads the bilayer.

It is found in the membrane. This is Protein alpha-1 (alpha) from Bos taurus (Bovine).